Reading from the N-terminus, the 996-residue chain is UPF0182 protein CE0802 (996 aa).

A run of 7 helical transmembrane segments spans residues 19–39 (VTWIIGIIALLVLVTPLTVGF), 63–83 (IILFIVFALLAGFVTWLAGYF), 115–135 (ILIIVPIFVGLLGGLVGQRSW), 176–196 (STLLVVAFIIALVGHYLLGGI), 212–234 (GARAQLAVTAGLWMLVRVATYWL), 262–282 (KIILMVISIIVAVAFFSAIFL), and 290–310 (LAVVLLVLSSVVVGAVWPLML). A disordered region spans residues 920 to 950 (VPDVNATEDADATTDGEDETPAAPAAPAGSE). Residues 925–939 (ATEDADATTDGEDET) show a composition bias toward acidic residues. A compositionally biased stretch (low complexity) spans 940-950 (PAAPAAPAGSE).

This sequence belongs to the UPF0182 family.

The protein localises to the cell membrane. The protein is UPF0182 protein CE0802 of Corynebacterium efficiens (strain DSM 44549 / YS-314 / AJ 12310 / JCM 11189 / NBRC 100395).